The chain runs to 141 residues: Large ribosomal subunit protein uL11 (141 aa).

It belongs to the universal ribosomal protein uL11 family. In terms of assembly, part of the ribosomal stalk of the 50S ribosomal subunit. Interacts with L10 and the large rRNA to form the base of the stalk. L10 forms an elongated spine to which L12 dimers bind in a sequential fashion forming a multimeric L10(L12)X complex. One or more lysine residues are methylated.

Its function is as follows. Forms part of the ribosomal stalk which helps the ribosome interact with GTP-bound translation factors. The polypeptide is Large ribosomal subunit protein uL11 (Lacticaseibacillus casei (strain BL23) (Lactobacillus casei)).